The following is a 251-amino-acid chain: Protein TK1472 (251 aa).

It belongs to the CinA family.

In Thermococcus kodakarensis (strain ATCC BAA-918 / JCM 12380 / KOD1) (Pyrococcus kodakaraensis (strain KOD1)), this protein is Protein TK1472.